We begin with the raw amino-acid sequence, 473 residues long: Cytochrome P450 716A2 (473 aa).

Residues 1–21 (MYLTIIFLFISSIIFPLLFFL) traverse the membrane as a helical segment. Heme is bound at residue Cys420.

It belongs to the cytochrome P450 family. It depends on heme as a cofactor.

It localises to the membrane. Possesses triterpene oxidizing activity. Catalyzes the C28 hydroxylation of alpha-amyrin, beta-amyrin, and lupeol, producing uvaol, erythrodiol, and betulin, respectively. Catalyzes the C28 carboxylation of alpha- and beta-amyrin. Possesses 22alpha-hydroxylation activity against alpha- and beta-amaryn. The protein is Cytochrome P450 716A2 of Arabidopsis thaliana (Mouse-ear cress).